The sequence spans 303 residues: Nucleotide-binding protein SAB0719 (303 aa).

18-25 is an ATP binding site; it reads GLSGAGKS. 69 to 72 is a GTP binding site; sequence DLRG.

This sequence belongs to the RapZ-like family.

Functionally, displays ATPase and GTPase activities. The sequence is that of Nucleotide-binding protein SAB0719 from Staphylococcus aureus (strain bovine RF122 / ET3-1).